A 261-amino-acid chain; its full sequence is MWPPAIAETEEVGRIQDLDRQKLPLFSHIETQERVEQKMNLDTLKMEATTETVEVLVKPVGYVWTVFIKMIETWRLRCGARSCRCWCRFPWRISRPATTSPNRFTYTAARGTISLLRSAPELIVALFLVLAYGFGPIAGVLALGLHAAGFLGKFYAEDIENADKKPQEALEAIGAGKLKTLWYGVIPQVLPQYIAYTAYILDRNLRMATVIGLVGAGGIGQELKGRFDMFQYGHVMTILIAIFVFVFVLDQLQARIRAKLI.

In terms of domain architecture, ABC transmembrane type-1 spans 47–253 (EATTETVEVL…VFVFVLDQLQ (207 aa)). A run of 3 helical transmembrane segments spans residues 122-142 (LIVA…GVLA), 203-220 (RNLR…GGIG), and 229-249 (MFQY…VFVL).

It belongs to the binding-protein-dependent transport system permease family.

The protein localises to the cell inner membrane. Probably forms part of a binding-protein-dependent hypophosphite transporter. In Stutzerimonas stutzeri (Pseudomonas stutzeri), this protein is Putative phosphite transport system permease protein HtxE (htxE).